The sequence spans 203 residues: Shikimate kinase (203 aa).

Residue 38–43 (GAGKST) participates in ATP binding. Mg(2+) is bound at residue Ser42. Positions 60, 84, and 106 each coordinate substrate. Arg144 provides a ligand contact to ATP. Arg163 serves as a coordination point for substrate.

Belongs to the shikimate kinase family. As to quaternary structure, monomer. Mg(2+) serves as cofactor.

It localises to the cytoplasm. The catalysed reaction is shikimate + ATP = 3-phosphoshikimate + ADP + H(+). The protein operates within metabolic intermediate biosynthesis; chorismate biosynthesis; chorismate from D-erythrose 4-phosphate and phosphoenolpyruvate: step 5/7. Functionally, catalyzes the specific phosphorylation of the 3-hydroxyl group of shikimic acid using ATP as a cosubstrate. The chain is Shikimate kinase from Rhodopseudomonas palustris (strain ATCC BAA-98 / CGA009).